The chain runs to 410 residues: Ribosomal RNA large subunit methyltransferase G (410 aa).

It belongs to the methyltransferase superfamily. RlmG family.

The protein resides in the cytoplasm. The enzyme catalyses guanosine(1835) in 23S rRNA + S-adenosyl-L-methionine = N(2)-methylguanosine(1835) in 23S rRNA + S-adenosyl-L-homocysteine + H(+). Functionally, specifically methylates the guanine in position 1835 (m2G1835) of 23S rRNA. In Alteromonas mediterranea (strain DSM 17117 / CIP 110805 / LMG 28347 / Deep ecotype), this protein is Ribosomal RNA large subunit methyltransferase G.